The following is a 334-amino-acid chain: Glycerol-3-phosphate dehydrogenase [NAD(P)+] 2 (334 aa).

Residues Trp-16, Arg-36, Arg-37, and Lys-110 each coordinate NADPH. Lys-110 and Gly-140 together coordinate sn-glycerol 3-phosphate. Residue Ala-144 coordinates NADPH. Lys-195, Asp-248, Ser-258, Arg-259, and Asn-260 together coordinate sn-glycerol 3-phosphate. The Proton acceptor role is filled by Lys-195. Arg-259 is an NADPH binding site. Residues Val-282 and Glu-284 each coordinate NADPH.

Belongs to the NAD-dependent glycerol-3-phosphate dehydrogenase family.

It localises to the cytoplasm. The enzyme catalyses sn-glycerol 3-phosphate + NAD(+) = dihydroxyacetone phosphate + NADH + H(+). The catalysed reaction is sn-glycerol 3-phosphate + NADP(+) = dihydroxyacetone phosphate + NADPH + H(+). Its pathway is membrane lipid metabolism; glycerophospholipid metabolism. In terms of biological role, catalyzes the reduction of the glycolytic intermediate dihydroxyacetone phosphate (DHAP) to sn-glycerol 3-phosphate (G3P), the key precursor for phospholipid synthesis. The protein is Glycerol-3-phosphate dehydrogenase [NAD(P)+] 2 of Mycobacterium bovis (strain ATCC BAA-935 / AF2122/97).